The sequence spans 303 residues: Probable cell division protein WhiA (303 aa).

A DNA-binding region (H-T-H motif) is located at residues 272 to 303 (SIQQLADSLSTPLTKSGVNHRLRKINKIADEL).

Belongs to the WhiA family.

In terms of biological role, involved in cell division and chromosome segregation. The sequence is that of Probable cell division protein WhiA from Streptococcus pneumoniae serotype 2 (strain D39 / NCTC 7466).